We begin with the raw amino-acid sequence, 341 residues long: Holliday junction branch migration complex subunit RuvB (341 aa).

The segment at 1 to 182 is large ATPase domain (RuvB-L); it reads MTDADPTLRP…FGIPTRLLFY (182 aa). Residues leucine 21, arginine 22, glycine 63, lysine 66, threonine 67, threonine 68, 129–131, arginine 172, tyrosine 182, and arginine 219 each bind ATP; that span reads EDF. Residue threonine 67 participates in Mg(2+) binding. A small ATPAse domain (RuvB-S) region spans residues 183–253; it reads TVDELFEIVS…LADHALTRLG (71 aa). The interval 256-341 is head domain (RuvB-H); it reads QLGLDGADRR…RPPGQSDLFG (86 aa). The DNA site is built by arginine 292, arginine 311, and arginine 316.

It belongs to the RuvB family. Homohexamer. Forms an RuvA(8)-RuvB(12)-Holliday junction (HJ) complex. HJ DNA is sandwiched between 2 RuvA tetramers; dsDNA enters through RuvA and exits via RuvB. An RuvB hexamer assembles on each DNA strand where it exits the tetramer. Each RuvB hexamer is contacted by two RuvA subunits (via domain III) on 2 adjacent RuvB subunits; this complex drives branch migration. In the full resolvosome a probable DNA-RuvA(4)-RuvB(12)-RuvC(2) complex forms which resolves the HJ.

The protein localises to the cytoplasm. It carries out the reaction ATP + H2O = ADP + phosphate + H(+). The RuvA-RuvB-RuvC complex processes Holliday junction (HJ) DNA during genetic recombination and DNA repair, while the RuvA-RuvB complex plays an important role in the rescue of blocked DNA replication forks via replication fork reversal (RFR). RuvA specifically binds to HJ cruciform DNA, conferring on it an open structure. The RuvB hexamer acts as an ATP-dependent pump, pulling dsDNA into and through the RuvAB complex. RuvB forms 2 homohexamers on either side of HJ DNA bound by 1 or 2 RuvA tetramers; 4 subunits per hexamer contact DNA at a time. Coordinated motions by a converter formed by DNA-disengaged RuvB subunits stimulates ATP hydrolysis and nucleotide exchange. Immobilization of the converter enables RuvB to convert the ATP-contained energy into a lever motion, pulling 2 nucleotides of DNA out of the RuvA tetramer per ATP hydrolyzed, thus driving DNA branch migration. The RuvB motors rotate together with the DNA substrate, which together with the progressing nucleotide cycle form the mechanistic basis for DNA recombination by continuous HJ branch migration. Branch migration allows RuvC to scan DNA until it finds its consensus sequence, where it cleaves and resolves cruciform DNA. This Ruegeria pomeroyi (strain ATCC 700808 / DSM 15171 / DSS-3) (Silicibacter pomeroyi) protein is Holliday junction branch migration complex subunit RuvB.